Reading from the N-terminus, the 107-residue chain is UPF0145 protein YbjQ (107 aa).

Belongs to the UPF0145 family.

The chain is UPF0145 protein YbjQ from Escherichia coli (strain SMS-3-5 / SECEC).